Consider the following 318-residue polypeptide: Mitochondrial thiamine pyrophosphate carrier (318 aa).

Solcar repeat units lie at residues 13-106 (ISNV…LTEL), 116-202 (RDFS…LKRA), and 214-309 (NGNF…FCNF). A helical membrane pass occupies residues 19-39 (AVAGSVSGLVTRVLISPLDVI). Serine 51 carries the phosphoserine modification. 4 helical membrane passes run 87-107 (LLSI…TELV), 122-142 (FLCG…VDVL), 173-193 (VFYK…GFQF), and 220-240 (LLCG…LDLF). Residues 241 to 246 (KKRLQV) carry the Substrate recognition motif. A helical membrane pass occupies residues 293 to 313 (ALSTGLVFFWYELFCNFFHHM).

This sequence belongs to the mitochondrial carrier (TC 2.A.29) family.

It localises to the mitochondrion membrane. It catalyses the reaction thiamine phosphate(out) + thiamine diphosphate(in) = thiamine phosphate(in) + thiamine diphosphate(out). In terms of biological role, mitochondrial transporter mediating uptake of thiamine diphosphate into mitochondria. It is not clear if the antiporter activity is affected by the membrane potential or by the proton electrochemical gradient. In Bos taurus (Bovine), this protein is Mitochondrial thiamine pyrophosphate carrier (SLC25A19).